A 600-amino-acid polypeptide reads, in one-letter code: Elongation factor 4 (600 aa).

In terms of domain architecture, tr-type G spans 5 to 187 (SHIRNFSIVA…ALVNRLPCPE (183 aa)). Residues 17–22 (DHGKST) and 134–137 (NKID) each bind GTP.

This sequence belongs to the TRAFAC class translation factor GTPase superfamily. Classic translation factor GTPase family. LepA subfamily.

It localises to the cell inner membrane. The enzyme catalyses GTP + H2O = GDP + phosphate + H(+). Functionally, required for accurate and efficient protein synthesis under certain stress conditions. May act as a fidelity factor of the translation reaction, by catalyzing a one-codon backward translocation of tRNAs on improperly translocated ribosomes. Back-translocation proceeds from a post-translocation (POST) complex to a pre-translocation (PRE) complex, thus giving elongation factor G a second chance to translocate the tRNAs correctly. Binds to ribosomes in a GTP-dependent manner. The polypeptide is Elongation factor 4 (Paramagnetospirillum magneticum (strain ATCC 700264 / AMB-1) (Magnetospirillum magneticum)).